Reading from the N-terminus, the 1033-residue chain is Collagen alpha-2(I) chain (1033 aa).

The disordered stretch occupies residues 1–1033; sequence SGGFDFSFLP…FGYEGDFYRA (1033 aa). Composition is skewed to low complexity over residues 25-71, 154-175, and 221-242; these read LGPG…ARGP, SRGS…SAGP, and PGAN…AGAP. The segment covering 276–285 has biased composition (gly residues); the sequence is GESGGKGEPG. Residues 286–296 show a composition bias toward low complexity; the sequence is SAGPQGPPGSS. Over residues 318–327 the composition is skewed to gly residues; the sequence is GLRGGPGSRG. Composition is skewed to low complexity over residues 340-356 and 391-410; these read PAGA…RGPS and LPGI…RGEA. The segment covering 459 to 468 has biased composition (gly residues); it reads GVQGGKGEQG. Low complexity-rich tracts occupy residues 519-528 and 540-550; these read PSGAIGSRGP and EPGVVGAPGTA. Residues 551-560 are compositionally biased toward gly residues; the sequence is GPAGSGGLPG. Composition is skewed to low complexity over residues 583–627 and 634–654; these read VGTT…PRGS and VGPA…QPGA. Positions 655–664 are enriched in basic and acidic residues; it reads KGERGTKGPK. Residues 672–682 are compositionally biased toward low complexity; sequence PTGPVGSAGPA. Residues 692 to 701 show a composition bias toward gly residues; it reads GSRGDGGPPG. Over residues 703–712 the composition is skewed to low complexity; sequence TGFPGAAGRT. Residues 749-758 are compositionally biased toward gly residues; the sequence is GETGAGGPPG. Composition is skewed to low complexity over residues 766–793 and 801–811; these read SGEP…LGLP and LPGVAGAVGEP. A compositionally biased stretch (gly residues) spans 812-834; the sequence is GPLGIGPPGARGPSGGVGPGVNG. Positions 873 to 909 are enriched in low complexity; that stretch reads AAGAPGPHGAVGPAGKHGNRGEPGPVGSAGPVGALGP. Residues 919-930 show a composition bias toward basic and acidic residues; the sequence is RGDKGEAGDKGP. Positions 1003-1015 are enriched in pro residues; it reads SGPPGPPGPPGPP.

It belongs to the fibrillar collagen family. As to quaternary structure, trimers of one alpha 2(I) and two alpha 1(I) chains. Interacts (via C-terminus) with TMEM131 (via PapD-L domain); the interaction is direct and is involved in assembly and TRAPPIII ER-to-Golgi transport complex-dependent secretion of collagen. Prolines at the third position of the tripeptide repeating unit (G-X-Y) are hydroxylated in some or all of the chains. Expressed in bone.

It localises to the secreted. It is found in the extracellular space. The protein localises to the extracellular matrix. Its function is as follows. Type I collagen is a member of group I collagen (fibrillar forming collagen). The chain is Collagen alpha-2(I) chain from Mylodon darwinii (Giant ground sloth).